Here is a 231-residue protein sequence, read N- to C-terminus: Endo-1,4-beta-xylanase 4 (231 aa).

An N-terminal signal peptide occupies residues 1–18; sequence MVSFTTILVAATAALVAA. One can recognise a GH11 domain in the interval 42–230; the sequence is GGTPSSTGTH…SSGSSTVTIQ (189 aa). Residue Asn-99 is glycosylated (N-linked (GlcNAc...) asparagine). The active-site Nucleophile is Glu-126. Glu-217 serves as the catalytic Proton donor.

It belongs to the glycosyl hydrolase 11 (cellulase G) family.

It localises to the secreted. The enzyme catalyses Endohydrolysis of (1-&gt;4)-beta-D-xylosidic linkages in xylans.. It participates in glycan degradation; xylan degradation. Functionally, endo-1,4-beta-xylanase involved in the hydrolysis of xylan, a major structural heterogeneous polysaccharide found in plant biomass representing the second most abundant polysaccharide in the biosphere, after cellulose. In Pyricularia grisea (Crabgrass-specific blast fungus), this protein is Endo-1,4-beta-xylanase 4 (XYL4).